A 538-amino-acid chain; its full sequence is Coiled-coil domain-containing protein 8 (538 aa).

The tract at residues 58–128 (IMEKSTPHPP…QGPRRGKKVR (71 aa)) is disordered. Residues 119 to 128 (QGPRRGKKVR) are compositionally biased toward basic residues. Phosphoserine occurs at positions 142, 146, and 261. The tract at residues 213 to 473 (WAPRAGPGVG…GTAPGARARK (261 aa)) is disordered. Positions 301–313 (DSQREEAIADQRE) are enriched in basic and acidic residues. Residues 321–332 (AGAPADQGAEAA) show a composition bias toward low complexity. The stretch at 349-366 (AEEGAEAADNQREEAADN) forms a coiled coil. Basic and acidic residues-rich tracts occupy residues 357-373 (DNQR…EAPA), 381-392 (DNHREEAADNQR), and 405-419 (DNQR…RERA). Low complexity-rich tracts occupy residues 428-438 (QRAQARAGQRA) and 458-469 (AAQGTTGTAPGA). The PxLPxI/L motif; mediates interaction with ANKRA2 signature appears at 500 to 506 (PRLPTLP). A coiled-coil region spans residues 514-535 (EARNLRVLRAEARAEAEQGEQE).

In terms of assembly, component of the 3M complex, composed of core components CUL7, CCDC8 and OBSL1. Interacts (via PxLPxI/L motif) with ANKRA2 (via ankyrin repeats); may link the 3M complex to histone deacetylases including HDAC4 and HDAC5. Widely expressed with low levels in spleen, skeletal muscle, small intestine, kidney and liver.

It localises to the cytoplasm. The protein resides in the cytoskeleton. Its subcellular location is the microtubule organizing center. The protein localises to the centrosome. Core component of the 3M complex, a complex required to regulate microtubule dynamics and genome integrity. It is unclear how the 3M complex regulates microtubules, it could act by controlling the level of a microtubule stabilizer. Required for localization of CUL7 to the centrosome. This chain is Coiled-coil domain-containing protein 8 (CCDC8), found in Homo sapiens (Human).